We begin with the raw amino-acid sequence, 298 residues long: MPWIQLQIPADPDTADQLEDLLMEMGADAVSMEDAADQPLYEPDPGTTPLWSQTTVTGLFQSDRNIEQLLADIRDAWHQQTQQSLADIDVTLVEDKDWERAWMDDFHPLQFGERLWIVPSWHEAPDPDAANLLLDPGLAFGTGTHPTTALCLEWLDGQDVAGKQVTDYGCGSGILGLAALLLGADHVVGVDTDPQALEASRDNARRNGVEDSRLDLYLPGQDPDTRADIMLANILAQPLIGLAPRLAELTRPGGHLVLSGILFNQAREVMDAYEPWFVMDEPEQKEDWIRLTGRRKDG.

Residues Thr148, Gly169, Asp191, and Asn233 each contribute to the S-adenosyl-L-methionine site.

The protein belongs to the methyltransferase superfamily. PrmA family.

The protein localises to the cytoplasm. It catalyses the reaction L-lysyl-[protein] + 3 S-adenosyl-L-methionine = N(6),N(6),N(6)-trimethyl-L-lysyl-[protein] + 3 S-adenosyl-L-homocysteine + 3 H(+). In terms of biological role, methylates ribosomal protein L11. The protein is Ribosomal protein L11 methyltransferase of Marinobacter nauticus (strain ATCC 700491 / DSM 11845 / VT8) (Marinobacter aquaeolei).